Here is a 218-residue protein sequence, read N- to C-terminus: Large ribosomal subunit protein uL3 (218 aa).

The segment at 134–154 (GRASHGNSRSHNVPGSIGMAQ) is disordered. Q154 carries the N5-methylglutamine modification.

This sequence belongs to the universal ribosomal protein uL3 family. As to quaternary structure, part of the 50S ribosomal subunit. Forms a cluster with proteins L14 and L19. Methylated by PrmB.

One of the primary rRNA binding proteins, it binds directly near the 3'-end of the 23S rRNA, where it nucleates assembly of the 50S subunit. The sequence is that of Large ribosomal subunit protein uL3 from Polynucleobacter necessarius subsp. necessarius (strain STIR1).